A 374-amino-acid polypeptide reads, in one-letter code: uncharacterized protein (374 aa).

A compositionally biased stretch (low complexity) spans arginine 86 to arginine 104. The segment at arginine 86–alanine 109 is disordered. A Macro domain is found at tryptophan 179–glycine 354.

This is an uncharacterized protein from Mycobacterium tuberculosis (strain CDC 1551 / Oshkosh).